Here is a 59-residue protein sequence, read N- to C-terminus: Large ribosomal subunit protein bL32 (59 aa).

A disordered region spans residues 1–59 (MAVQQNKKSPSKRGMHRSHDALTAPALFVDSTTGEVHRPHHISPNGMYRGRKVVKAKGE). Basic residues predominate over residues 49–59 (RGRKVVKAKGE).

This sequence belongs to the bacterial ribosomal protein bL32 family.

This Neisseria gonorrhoeae (strain ATCC 700825 / FA 1090) protein is Large ribosomal subunit protein bL32.